Reading from the N-terminus, the 961-residue chain is Endochitinase A (961 aa).

The N-terminal stretch at 1 to 21 is a signal peptide; that stretch reads MAPKLFTFVSALSGLASLASA. One can recognise a GH18 domain in the interval 28-339; that stretch reads SNIAVYYGQG…EKIREILYDL (312 aa). Glu175 acts as the Proton donor in catalysis. Disordered regions lie at residues 338–720, 767–787, 813–842, and 912–933; these read DLDP…TTTE, TDVP…TADI, PPAT…GEVS, and HVPV…ASPT. Positions 342–355 are enriched in pro residues; it reads NHPPPTTSPTPTPT. Composition is skewed to low complexity over residues 356-510, 519-544, 552-604, and 612-635; these read PSTT…STSS, SSTS…PVIS, TSSS…PETT, and TPGS…PATS. Over residues 636–665 the composition is skewed to polar residues; it reads GGHTETSTVSTSSANQTPSASTSKPLIPTN. Over residues 666–720 the composition is skewed to low complexity; it reads SASSTSTGSVTSTPSAPGVPSSSAGSDETATTSTTDSEPTSTSSGSVTAKPTTTE. Gly936 carries GPI-anchor amidated glycine lipidation. The propeptide at 937–961 is removed in mature form; sequence AGSRYDVVKGVPALVALALSLLAVL.

This sequence belongs to the glycosyl hydrolase 18 family. Chitinase class III subfamily. In terms of processing, O-glycosylated but not N-glycosylated.

The protein resides in the cell membrane. The protein localises to the secreted. It localises to the cell wall. It is found in the cell tip. The catalysed reaction is Random endo-hydrolysis of N-acetyl-beta-D-glucosaminide (1-&gt;4)-beta-linkages in chitin and chitodextrins.. Its function is as follows. GPI-anchored chitinase involved in the degradation of chitin, a component of the cell walls of fungi and exoskeletal elements of some animals (including worms and arthropods). Required to reshape the cell wall at the sites where cell wall remodeling and/or cell wall maturation actively take place such as sites of conidia formation. In Emericella nidulans (Aspergillus nidulans), this protein is Endochitinase A (chiA).